The primary structure comprises 651 residues: MSESTPEVSSSYPPPAHFAEHANARAELYREAEEDRLAFWAKQANRLSWTTPFTEVLDWSEAPFAKWFVGGELNVAYNCVDRHVEAGHGDRVAIHWEGEPVGDRRTLTYSDLLAEVSKAANALTDLGLVAGDRVAIYLPLIPEAVIAMLACARLGIMHSVVFGGFTAAALQARIVDAQAKLLITADGQFRRGKPSPLKAAADEALAAIPDCSVEHVLVVRRTGIEMAWSEGRDLWWHHVVGSASPAHTPEPFDSEHPLFLLYTSGTTGKPKGIMHTSGGYLTQCCYTMRTIFDVKPDSDVFWCTADIGWVTGHTYGVYGPLCNGVTEVLYEGTPDTPDRHRHFQIIEKYGVTIYYTAPTLIRMFMKWGREIPDSHDLSSLRLLGSVGEPINPEAWRWYRDVIGGGRTPLVDTWWQTETGSAMISPLPGIAAAKPGSAMTPLPGISAKIVDDHGDPLPPHTEGAQHVTGYLVLDQPWPSMLRGIWGDPARYWHSYWSKFSDKGYYFAGDGARIDPDGAIWVLGRIDDVMNVSGHRISTAEVESALVAHSGVAEAAVVGVTDETTTQAICAFVVLRANYAPHDRTAEELRTEVARVISPIARPRDVHVVPELPKTRSGKIMRRLLRDVAENRELGDTSTLLDPTVFDAIRAAK.

CoA is bound by residues 190 to 193 and T311; that span reads RRGK. Residues 387–389, 411–416, D508, and R523 contribute to the ATP site; these read GEP and DTWWQT. S531 provides a ligand contact to CoA. Residue R534 participates in ATP binding. V545, H547, and V550 together coordinate Mg(2+). K617 is subject to N6-acetyllysine.

The protein belongs to the ATP-dependent AMP-binding enzyme family. Mg(2+) serves as cofactor. Acetylated. Deacetylation by the SIR2-homolog deacetylase activates the enzyme.

The catalysed reaction is acetate + ATP + CoA = acetyl-CoA + AMP + diphosphate. Catalyzes the conversion of acetate into acetyl-CoA (AcCoA), an essential intermediate at the junction of anabolic and catabolic pathways. AcsA undergoes a two-step reaction. In the first half reaction, AcsA combines acetate with ATP to form acetyl-adenylate (AcAMP) intermediate. In the second half reaction, it can then transfer the acetyl group from AcAMP to the sulfhydryl group of CoA, forming the product AcCoA. The polypeptide is Acetyl-coenzyme A synthetase (Mycobacterium bovis (strain ATCC BAA-935 / AF2122/97)).